Consider the following 64-residue polypeptide: Potassium channel toxin kappa-KTx 3.1 (64 aa).

The first 26 residues, 1 to 26 (MKSTLMTASVLILVLLSIVDYASVYA), serve as a signal peptide directing secretion. The propeptide occupies 27–36 (EFIDSEISLE). Intrachain disulfides connect cysteine 43–cysteine 61 and cysteine 47–cysteine 57.

Belongs to the short scorpion toxin superfamily. Potassium channel inhibitor kappa-KTx family. Kappa-KTx 3 subfamily. In terms of tissue distribution, expressed by the venom gland.

The protein resides in the secreted. Potassium channel inhibitor (Kv). In Heterometrus petersii (Asian forest scorpion), this protein is Potassium channel toxin kappa-KTx 3.1.